The primary structure comprises 144 residues: Urease accessory protein UreE (144 aa).

This sequence belongs to the UreE family.

The protein localises to the cytoplasm. Involved in urease metallocenter assembly. Binds nickel. Probably functions as a nickel donor during metallocenter assembly. The protein is Urease accessory protein UreE of Thermosynechococcus vestitus (strain NIES-2133 / IAM M-273 / BP-1).